Reading from the N-terminus, the 430-residue chain is MAEKPTNTSVPIPGSEDPQKENIRCLSTLGHFGFECLPTQLVNKSIQKGFSFNILCVGETGIGKTTLINTLFNTNLKETKSSHFYSKVGLTVKTYELLERNIPLRLTVVKTVGYGDQINKEASYQPVVDYLDAQFEAYLQEELKIKRSLADYHDSRIHVCLYFITPTGHSLKSLDLLTMKSIDRRVNIIPLIAKADSLSKNDLQRFKNNIMSELNSNGIQIYQFQVDDEASAQVNSSGLLPFAVVGSMEEVKVGKRMVRGRHYPWGVLQEVENENHCDFVKLRDLLLSTNMEDLKDQTHTQHYECYRSNRLQKLGFSDTGPDNRPVSFQEMYEAKRREFHNQCQKEEEELKQTFMQRVKEKELTFKDAEKELQDKFEHLKRIQQEEILKLEEERRKLEEQIIDFYKMKAASESAQAQVCTNIKKDKDRKK.

The Septin-type G domain occupies 48–313; the sequence is KGFSFNILCV…ECYRSNRLQK (266 aa). Residues 58–65 are G1 motif; sequence GETGIGKT. GTP-binding positions include 58–65, Gly-113, 194–202, Gly-246, and Arg-261; these read GETGIGKT and KADSLSKND. Positions 110–113 are G3 motif; it reads KTVG. The interval 193-196 is G4 motif; it reads AKAD. A coiled-coil region spans residues 329–410; it reads QEMYEAKRRE…IIDFYKMKAA (82 aa). The required for interaction with SEPTIN4. Required for migration of cortical neurons during corticogenesis stretch occupies residues 367–430; sequence DAEKELQDKF…NIKKDKDRKK (64 aa).

Belongs to the TRAFAC class TrmE-Era-EngA-EngB-Septin-like GTPase superfamily. Septin GTPase family. As to quaternary structure, septins polymerize into heterooligomeric protein complexes that form filaments, and can associate with cellular membranes, actin filaments and microtubules. GTPase activity is required for filament formation. Interacts with ACTN4. Interacts with SEPTIN9. Interacts (via C-terminus) with SEPTIN4. Expressed in the testis and brain including the cerebrum, hippocampus and cerebellum (at protein level).

The protein resides in the cytoplasm. Its subcellular location is the cytoskeleton. The protein localises to the cell projection. It localises to the axon. It is found in the dendrite. The protein resides in the perikaryon. Its subcellular location is the perinuclear region. The protein localises to the cytoplasmic vesicle. It localises to the secretory vesicle. It is found in the acrosome. In terms of biological role, filament-forming cytoskeletal GTPase. Involved in the migration of cortical neurons and the formation of neuron leading processes during embryonic development. Plays a role in sperm head formation during spermiogenesis, potentially via facilitating localization of ACTN4 to cell filaments. The polypeptide is Septin-14 (Mus musculus (Mouse)).